The following is a 410-amino-acid chain: Peptidase T (410 aa).

Residues Arg-11–Glu-30 are disordered. His-78 is a Zn(2+) binding site. Residue Asp-80 is part of the active site. Residue Asp-140 coordinates Zn(2+). The Proton acceptor role is filled by Glu-174. Zn(2+) is bound by residues Glu-175, Asp-197, and His-379.

The protein belongs to the peptidase M20B family. The cofactor is Zn(2+).

Its subcellular location is the cytoplasm. It catalyses the reaction Release of the N-terminal residue from a tripeptide.. In terms of biological role, cleaves the N-terminal amino acid of tripeptides. In Staphylococcus carnosus (strain TM300), this protein is Peptidase T.